The sequence spans 338 residues: Electron transfer flavoprotein subunit alpha (338 aa).

FAD is bound at residue isoleucine 275–aspartate 303.

It belongs to the ETF alpha-subunit/FixB family. As to quaternary structure, heterodimer of an alpha and a beta subunit. The cofactor is FAD.

In terms of biological role, the electron transfer flavoprotein serves as a specific electron acceptor for other dehydrogenases. It transfers the electrons to the main respiratory chain via ETF-ubiquinone oxidoreductase (ETF dehydrogenase). The polypeptide is Electron transfer flavoprotein subunit alpha (etfA) (Megasphaera elsdenii).